Reading from the N-terminus, the 261-residue chain is Glucose 1-dehydrogenase A (261 aa).

11–35 (VITGGSTGLGRAMAVRFGQEEAKVV) provides a ligand contact to NADP(+). A substrate-binding site is contributed by S145. Residue Y158 is the Proton acceptor of the active site.

The protein belongs to the short-chain dehydrogenases/reductases (SDR) family. Homotetramer.

The enzyme catalyses D-glucose + NAD(+) = D-glucono-1,5-lactone + NADH + H(+). It carries out the reaction D-glucose + NADP(+) = D-glucono-1,5-lactone + NADPH + H(+). The sequence is that of Glucose 1-dehydrogenase A (gdhA) from Priestia megaterium (Bacillus megaterium).